Here is a 422-residue protein sequence, read N- to C-terminus: Probable zinc-type alcohol dehydrogenase-like protein L498 (422 aa).

Residues C108, H129, C160, C163, C166, C174, and C231 each coordinate Zn(2+).

Zn(2+) is required as a cofactor.

The protein resides in the host cytoplasm. Its subcellular location is the virion. The chain is Probable zinc-type alcohol dehydrogenase-like protein L498 from Acanthamoeba polyphaga (Amoeba).